The chain runs to 58 residues: Large ribosomal subunit protein bL32c (58 aa).

2 disordered regions span residues methionine 1 to methionine 21 and leucine 34 to asparagine 58. A compositionally biased stretch (low complexity) spans glutamine 44 to asparagine 58.

The protein belongs to the bacterial ribosomal protein bL32 family.

The protein resides in the plastid. Its subcellular location is the chloroplast. This chain is Large ribosomal subunit protein bL32c, found in Cyanidioschyzon merolae (strain NIES-3377 / 10D) (Unicellular red alga).